The chain runs to 401 residues: Argininosuccinate synthase (401 aa).

Residues 10-18 (AYSGGVDTS) and Ala-38 contribute to the ATP site. Residue Tyr-89 participates in L-citrulline binding. Gly-119 lines the ATP pocket. Thr-121, Asn-125, and Asp-126 together coordinate L-aspartate. An L-citrulline-binding site is contributed by Asn-125. L-citrulline is bound by residues Arg-129, Ser-177, Ser-186, Glu-262, and Tyr-274.

Belongs to the argininosuccinate synthase family. Type 1 subfamily. In terms of assembly, homotetramer.

It localises to the cytoplasm. It catalyses the reaction L-citrulline + L-aspartate + ATP = 2-(N(omega)-L-arginino)succinate + AMP + diphosphate + H(+). Its pathway is amino-acid biosynthesis; L-arginine biosynthesis; L-arginine from L-ornithine and carbamoyl phosphate: step 2/3. In Synechococcus sp. (strain CC9311), this protein is Argininosuccinate synthase.